Here is a 122-residue protein sequence, read N- to C-terminus: MAYDKQALIDQLSTLTIMELADLIDGLKEQWGVTAAVAVAGPGAGAAAPAAEEKTEFDVILVDAGASKINVIKELRAITGLGLKEAKDLSEKGGAIKEGVSKEDAEKFKAQLEGAGAKVEIR.

Belongs to the bacterial ribosomal protein bL12 family. Homodimer. Part of the ribosomal stalk of the 50S ribosomal subunit. Forms a multimeric L10(L12)X complex, where L10 forms an elongated spine to which 2 to 4 L12 dimers bind in a sequential fashion. Binds GTP-bound translation factors.

In terms of biological role, forms part of the ribosomal stalk which helps the ribosome interact with GTP-bound translation factors. Is thus essential for accurate translation. The chain is Large ribosomal subunit protein bL12 from Deinococcus geothermalis (strain DSM 11300 / CIP 105573 / AG-3a).